A 209-amino-acid polypeptide reads, in one-letter code: Thiamine-phosphate synthase (209 aa).

Residues 38 to 42 (QYRAK) and N70 each bind 4-amino-2-methyl-5-(diphosphooxymethyl)pyrimidine. 2 residues coordinate Mg(2+): D71 and D90. A 4-amino-2-methyl-5-(diphosphooxymethyl)pyrimidine-binding site is contributed by S109. 2-[(2R,5Z)-2-carboxy-4-methylthiazol-5(2H)-ylidene]ethyl phosphate is bound at residue 135-137 (TST). K138 contributes to the 4-amino-2-methyl-5-(diphosphooxymethyl)pyrimidine binding site. Residues G165 and 185 to 186 (VS) each bind 2-[(2R,5Z)-2-carboxy-4-methylthiazol-5(2H)-ylidene]ethyl phosphate.

Belongs to the thiamine-phosphate synthase family. It depends on Mg(2+) as a cofactor.

The catalysed reaction is 2-[(2R,5Z)-2-carboxy-4-methylthiazol-5(2H)-ylidene]ethyl phosphate + 4-amino-2-methyl-5-(diphosphooxymethyl)pyrimidine + 2 H(+) = thiamine phosphate + CO2 + diphosphate. The enzyme catalyses 2-(2-carboxy-4-methylthiazol-5-yl)ethyl phosphate + 4-amino-2-methyl-5-(diphosphooxymethyl)pyrimidine + 2 H(+) = thiamine phosphate + CO2 + diphosphate. It carries out the reaction 4-methyl-5-(2-phosphooxyethyl)-thiazole + 4-amino-2-methyl-5-(diphosphooxymethyl)pyrimidine + H(+) = thiamine phosphate + diphosphate. Its pathway is cofactor biosynthesis; thiamine diphosphate biosynthesis; thiamine phosphate from 4-amino-2-methyl-5-diphosphomethylpyrimidine and 4-methyl-5-(2-phosphoethyl)-thiazole: step 1/1. Its function is as follows. Condenses 4-methyl-5-(beta-hydroxyethyl)thiazole monophosphate (THZ-P) and 2-methyl-4-amino-5-hydroxymethyl pyrimidine pyrophosphate (HMP-PP) to form thiamine monophosphate (TMP). The polypeptide is Thiamine-phosphate synthase (Persephonella marina (strain DSM 14350 / EX-H1)).